The primary structure comprises 275 residues: Protein COFACTOR ASSEMBLY OF COMPLEX C SUBUNIT B CCB2, chloroplastic (275 aa).

A chloroplast-targeting transit peptide spans Met1–Arg19. The Stromal segment spans residues Ala20–Arg65. The helical transmembrane segment at Trp66–Ile86 threads the bilayer. Residues Ser87–Ser93 are Lumenal-facing. The helical transmembrane segment at Glu94–Leu114 threads the bilayer. Residues Lys115–Gly275 lie on the Stromal side of the membrane.

The protein resides in the plastid. It is found in the chloroplast thylakoid membrane. Functionally, required for the biogenesis and accumulation of native cytochrome b6 in the thylakoid membrane. Controls the conversion of apocytochrome b6 to holocytochrome b6. Required for covalent binding of the c-type heme to cytochrome b6. The sequence is that of Protein COFACTOR ASSEMBLY OF COMPLEX C SUBUNIT B CCB2, chloroplastic from Arabidopsis thaliana (Mouse-ear cress).